Reading from the N-terminus, the 100-residue chain is MYB-like transcription factor TCL2 (100 aa).

One can recognise a Myb-like domain in the interval 37–74; it reads TEQEEDLIFRMHRLVGDRWDLIAGRVVGREAKDIERYW.

As to quaternary structure, interacts with GL3. Expressed in cotyledons, petioles, rosette leaves, hydathodes, cauline leaves, stems, pedicels and flower buds.

The protein resides in the nucleus. Its function is as follows. MYB-type transcription factor involved in trichome cell specification. Acts as a negative regulator of trichome patterning and formation. May function by suppressing the expression of GL3. This is MYB-like transcription factor TCL2 (TCL2) from Arabidopsis thaliana (Mouse-ear cress).